A 336-amino-acid polypeptide reads, in one-letter code: Serpentine receptor class beta-15 (336 aa).

Transmembrane regions (helical) follow at residues 24 to 44 (LFIH…FVIF), 57 to 77 (FLFS…AIIS), 109 to 129 (IFMS…FIAM), 142 to 162 (LGPI…FFIY), 186 to 206 (FTFF…NSYL), 237 to 257 (VFVV…IMIL), and 276 to 296 (GAFT…AVYL).

This sequence belongs to the nematode receptor-like protein srb family.

The protein resides in the membrane. This is Serpentine receptor class beta-15 (srb-15) from Caenorhabditis elegans.